The primary structure comprises 121 residues: Large ribosomal subunit protein uL18 (121 aa).

Basic residues predominate over residues 1–22 (MIKKPDKKTLRQGKHKRVRRKV). Residues 1–23 (MIKKPDKKTLRQGKHKRVRRKVA) form a disordered region.

Belongs to the universal ribosomal protein uL18 family. Part of the 50S ribosomal subunit; part of the 5S rRNA/L5/L18/L25 subcomplex. Contacts the 5S and 23S rRNAs.

In terms of biological role, this is one of the proteins that bind and probably mediate the attachment of the 5S RNA into the large ribosomal subunit, where it forms part of the central protuberance. The chain is Large ribosomal subunit protein uL18 from Syntrophomonas wolfei subsp. wolfei (strain DSM 2245B / Goettingen).